A 1192-amino-acid polypeptide reads, in one-letter code: Plakophilin-4 (1192 aa).

The tract at residues 1–31 (MPAPEQASLVEEGQPQTRQEAASTGPGMEPE) is disordered. Residues 36 to 70 (TILASVKEQELQFQRLTRELEVERQIVASQLERCR) adopt a coiled-coil conformation. The tract at residues 73 to 262 (AESPSIASTS…PRPLNPSAYS (190 aa)) is disordered. Residue Ser75 is modified to Phosphoserine. Positions 77-86 (SIASTSSTEK) are enriched in polar residues. At Thr84 the chain carries Phosphothreonine. Residues Ser106, Ser132, Ser136, and Ser139 each carry the phosphoserine modification. 3 stretches are compositionally biased toward polar residues: residues 138-156 (GSLG…SDSG), 163-204 (FHNS…QPSV), and 214-230 (SVPS…STGV). Residues Ser221, Ser231, and Ser236 each carry the phosphoserine modification. Positions 231–242 (SPSRGSLRTSLG) are enriched in low complexity. Arg254 and Arg270 each carry omega-N-methylarginine. Phosphoserine is present on residues Ser273 and Ser281. The segment at 290–310 (SVTSRQTSNPNGPTPQYQTTA) is disordered. Ser314, Ser327, and Ser337 each carry phosphoserine. The segment at 323 to 348 (TRVASPSQGQVGSSSPKRSGMTAVPQ) is disordered. Residues 325 to 338 (VASPSQGQVGSSSP) show a composition bias toward low complexity. Residue Tyr372 is modified to Phosphotyrosine. Ser392, Ser403, and Ser406 each carry phosphoserine. Phosphothreonine is present on Thr412. At Tyr415 the chain carries Phosphotyrosine. The stretch at 415–455 (YEGRTYYSPVYRSPNHGTVELQGSQTALYRTGSVGIGNLQR) is one ARM 1 repeat. Ser422, Ser427, and Ser438 each carry phosphoserine. Tyr478 carries the phosphotyrosine modification. Residues Ser510, Ser512, and Ser515 each carry the phosphoserine modification. ARM repeat units follow at residues 518-557 (KDPR…HLCF), 560-599 (NKVK…NLVF), 604-644 (DENK…NLSS), 660-702 (LTNT…NLSS), and 706-751 (EARK…NLSY). Positions 773–782 (GKESPSKDSE) are enriched in basic and acidic residues. Positions 773–810 (GKESPSKDSEPSCWGKKKKKKKRTPQEDQWDGVGPIPG) are disordered. Phosphoserine is present on Ser776. 3 ARM repeats span residues 815–855 (PKGV…NLSA), 862–901 (AYIR…NMAL), and 950–993 (MENA…TLWQ). Phosphothreonine is present on residues Thr1013 and Thr1017. Ser1045 carries the post-translational modification Phosphoserine. The disordered stretch occupies residues 1058–1086 (PRSEYDRTQPPMQYYNSQGDATHKGLYPG). A compositionally biased stretch (polar residues) spans 1067 to 1077 (PPMQYYNSQGD). Ser1091, Ser1100, and Ser1135 each carry phosphoserine.

This sequence belongs to the beta-catenin family. As to quaternary structure, interacts with PDZD2. Interacts (via the C-terminus) with FRMPD2 (via the PDZ 2 domain). Interacts with RHOA; the interaction is detected at the midbody. Interacts with ECT2; the interaction is detected at the midbody. Interacts with CCDC85B. In terms of tissue distribution, expressed in salivary glands (at protein level). Expressed in arrector pili muscle (at protein level).

Its subcellular location is the cell junction. It is found in the desmosome. The protein resides in the cytoplasm. It localises to the cytoskeleton. The protein localises to the spindle. Its subcellular location is the midbody. It is found in the cell membrane. In terms of biological role, plays a role as a regulator of Rho activity during cytokinesis. May play a role in junctional plaques. This chain is Plakophilin-4 (PKP4), found in Homo sapiens (Human).